The sequence spans 345 residues: Protein arginine N-methyltransferase 1 (345 aa).

Residues 24-345 (ADYYFDSYSH…VKNTQQYRMR (322 aa)) form the SAM-dependent MTase PRMT-type domain. The S-adenosyl-L-methionine site is built by His37, Arg46, Gly70, Glu92, and Glu121. Active-site residues include Glu136 and Glu145.

The protein belongs to the class I-like SAM-binding methyltransferase superfamily. Protein arginine N-methyltransferase family. In terms of processing, phosphorylated during flagellum resorption.

The protein localises to the nucleus. Its subcellular location is the cell projection. It localises to the cilium. The protein resides in the flagellum. The catalysed reaction is L-arginyl-[protein] + S-adenosyl-L-methionine = N(omega)-methyl-L-arginyl-[protein] + S-adenosyl-L-homocysteine + H(+). The enzyme catalyses L-arginyl-[protein] + 2 S-adenosyl-L-methionine = N(omega),N(omega)-dimethyl-L-arginyl-[protein] + 2 S-adenosyl-L-homocysteine + 2 H(+). Its function is as follows. Arginine methyltransferase that methylates (mono and asymmetric dimethylation) the guanidino nitrogens of arginyl residues present in target proteins. Mediates asymmetric dimethylation of components of the axoneme during flagellum resorption, such as CCDC40/FAP172, CCDC65/FAP250, RSP1, RSP2, RPS5, RSP6, and tektin. This chain is Protein arginine N-methyltransferase 1 (PRMT1), found in Chlamydomonas reinhardtii (Chlamydomonas smithii).